The sequence spans 192 residues: Adenylate kinase (192 aa).

G10–T15 contacts ATP. Residues G30–A56 form an NMP region. AMP is bound by residues T31, R36, G82–R85, and Q89. The LID stretch occupies residues K123–D133. R124 provides a ligand contact to ATP. AMP contacts are provided by R130 and R141. Position 169 (D169) interacts with ATP.

The protein belongs to the adenylate kinase family. In terms of assembly, monomer.

It localises to the cytoplasm. The enzyme catalyses AMP + ATP = 2 ADP. It participates in purine metabolism; AMP biosynthesis via salvage pathway; AMP from ADP: step 1/1. Catalyzes the reversible transfer of the terminal phosphate group between ATP and AMP. Plays an important role in cellular energy homeostasis and in adenine nucleotide metabolism. In Rhodopirellula baltica (strain DSM 10527 / NCIMB 13988 / SH1), this protein is Adenylate kinase.